Here is a 267-residue protein sequence, read N- to C-terminus: Membrane-spanning 4-domains subfamily A member 10 (267 aa).

Topologically, residues 1–56 are cytoplasmic; the sequence is MAGQAPTAVPGSVTGEVSRWQNLGPAQPAQKVAQPQNLVPDGHLEKALEGSDLLQK. The chain crosses the membrane as a helical span at residues 57–77; sequence LGGFHIAIAFAHLAFGGYLIS. The Extracellular portion of the chain corresponds to 78–83; it reads TVKNLH. Residues 84-104 traverse the membrane as a helical segment; it reads LVVLKCWYPLWGTVSFLVAGM. The Cytoplasmic segment spans residues 105–118; the sequence is AAMTTVTFPKTSLK. The chain crosses the membrane as a helical span at residues 119–139; that stretch reads VLCVIANVISLFCALAGFFVI. The Extracellular segment spans residues 140-168; sequence AKDLFLEGPFPWPIWRPYPEPTTYIQRLE. Residues 169–189 form a helical membrane-spanning segment; it reads LTLFCFTFLEIFLSGSTAITA. The Cytoplasmic portion of the chain corresponds to 190-267; that stretch reads YRMKRLQAED…LHTGPRTLRK (78 aa).

Belongs to the MS4A family. In terms of tissue distribution, expressed in thymus, kidney, colon, brain and testis. Expressed also by various hematopoietic and lymphoblastoid cell lines.

The protein localises to the membrane. Its function is as follows. May be involved in signal transduction as a component of a multimeric receptor complex. The chain is Membrane-spanning 4-domains subfamily A member 10 (Ms4a10) from Mus musculus (Mouse).